We begin with the raw amino-acid sequence, 181 residues long: Der GTPase-activating protein YihI (181 aa).

A disordered region spans residues 1 to 73 (MSRIKKARKP…DPRIGSKKPI (73 aa)). Residues 22–32 (NRTDRDVESRE) show a composition bias toward basic and acidic residues. Residues 33-42 (LKRKRKRKGL) are compositionally biased toward basic residues. Residues 55–67 (QARRNAQKKDPRI) are compositionally biased toward basic and acidic residues.

The protein belongs to the YihI family. As to quaternary structure, interacts with Der.

Functionally, a GTPase-activating protein (GAP) that modifies Der/EngA GTPase function. May play a role in ribosome biogenesis. The sequence is that of Der GTPase-activating protein YihI from Aliivibrio fischeri (strain MJ11) (Vibrio fischeri).